The sequence spans 695 residues: UvrABC system protein C (695 aa).

The segment covering 1-10 has biased composition (basic and acidic residues); sequence MNQDPAETRD. Residues 1–53 form a disordered region; the sequence is MNQDPAETRDTAAPPPADTTSPSPVSPELEPRSAPGAQDIDAASASLTVDEDD. The segment covering 18 to 27 has biased composition (low complexity); the sequence is DTTSPSPVSP. Residues 88 to 166 enclose the GIY-YIG domain; the sequence is TSPGVYRMLN…IKQLRPRFNV (79 aa). Residues 276–311 enclose the UVR domain; the sequence is RAVKQELAVEMEKASNELEFETAALYRDRLAALSAI.

Belongs to the UvrC family. As to quaternary structure, interacts with UvrB in an incision complex.

It is found in the cytoplasm. Its function is as follows. The UvrABC repair system catalyzes the recognition and processing of DNA lesions. UvrC both incises the 5' and 3' sides of the lesion. The N-terminal half is responsible for the 3' incision and the C-terminal half is responsible for the 5' incision. The polypeptide is UvrABC system protein C (Rhodopseudomonas palustris (strain BisB5)).